A 209-amino-acid chain; its full sequence is MGKKKRSASSSRWLNEHFKDPFVQKAHKQKLRSRAYFKLDEIQQSDRLFKHGMTVVDLGAAPGGWSQYAIRQIGDLGRVIACDILEMDPIVGVDFLQGDFRDENVLQALLERVGEKKVDVVMSDMAPNFSGMPAVDIPRAMYLVELALDMCKQVLATNGCFVVKVFQGEGFDDYLKEIRSLFNTVKVRKPEASRGRSREVYIVAMGYMG.

S-adenosyl-L-methionine-binding residues include glycine 63, tryptophan 65, aspartate 83, aspartate 99, and aspartate 124. Lysine 164 (proton acceptor) is an active-site residue. Residues 191-209 (EASRGRSREVYIVAMGYMG) enclose the TRAM domain.

It belongs to the class I-like SAM-binding methyltransferase superfamily. RNA methyltransferase RlmE family.

The protein resides in the cytoplasm. The enzyme catalyses uridine(2552) in 23S rRNA + S-adenosyl-L-methionine = 2'-O-methyluridine(2552) in 23S rRNA + S-adenosyl-L-homocysteine + H(+). Specifically methylates the uridine in position 2552 of 23S rRNA at the 2'-O position of the ribose in the fully assembled 50S ribosomal subunit. This is Ribosomal RNA large subunit methyltransferase E from Histophilus somni (strain 129Pt) (Haemophilus somnus).